A 340-amino-acid polypeptide reads, in one-letter code: Methionyl-tRNA formyltransferase (340 aa).

A (6S)-5,6,7,8-tetrahydrofolate-binding site is contributed by 110 to 113; sequence SLLP.

The protein belongs to the Fmt family.

It carries out the reaction L-methionyl-tRNA(fMet) + (6R)-10-formyltetrahydrofolate = N-formyl-L-methionyl-tRNA(fMet) + (6S)-5,6,7,8-tetrahydrofolate + H(+). Functionally, attaches a formyl group to the free amino group of methionyl-tRNA(fMet). The formyl group appears to play a dual role in the initiator identity of N-formylmethionyl-tRNA by promoting its recognition by IF2 and preventing the misappropriation of this tRNA by the elongation apparatus. The protein is Methionyl-tRNA formyltransferase of Synechococcus sp. (strain WH7803).